Here is a 309-residue protein sequence, read N- to C-terminus: tRNA dimethylallyltransferase (309 aa).

9 to 16 contributes to the ATP binding site; sequence GPTAVGKT. 11 to 16 is a binding site for substrate; sequence TAVGKT. The interaction with substrate tRNA stretch occupies residues 34 to 37; that stretch reads DSMQ.

This sequence belongs to the IPP transferase family. In terms of assembly, monomer. The cofactor is Mg(2+).

The catalysed reaction is adenosine(37) in tRNA + dimethylallyl diphosphate = N(6)-dimethylallyladenosine(37) in tRNA + diphosphate. In terms of biological role, catalyzes the transfer of a dimethylallyl group onto the adenine at position 37 in tRNAs that read codons beginning with uridine, leading to the formation of N6-(dimethylallyl)adenosine (i(6)A). The polypeptide is tRNA dimethylallyltransferase (Enterococcus faecalis (strain ATCC 700802 / V583)).